The following is a 130-amino-acid chain: Serum amyloid A-4 protein (130 aa).

Residues 1-18 (MRLATVIVLCSLFLGVSG) form the signal peptide. A disordered region spans residues 109-130 (EEWGRSGKNPNHFRPEGLPEKF). Residues 121-130 (FRPEGLPEKF) are compositionally biased toward basic and acidic residues.

Belongs to the SAA family. In terms of assembly, apolipoprotein of the HDL complex. Expressed by the liver; secreted in plasma.

The protein resides in the secreted. Functionally, major acute phase reactant. The chain is Serum amyloid A-4 protein from Mus musculus (Mouse).